The sequence spans 381 residues: MSLFIQNDQQRQWMEKIGRIADEFQQTAAEDDEQGRFPAEKIQKLRDAGYTALTLPASHGGGGISVYDMLLFQERLARGDAPTALSIGWHLSVIGELGEGNSWDEDVFAFVAKEVQNGAVINRAATEAKTGSPTRGGRPGTHAVKKDGKWAVNGRKTFTTMSQALDYFLVTAWIEDKQTTGVFLIHKDDPGLSIEETWDMMAMRATGSHDLVLNEVMLDENKLVELLQGPRGAKPNGWLLHIPAIYLGVAQAARDYAVQFASEYSPNSLNGPIKNVPAVQQRTGEMELELLNARHFLFHIAQLYDDPVRRPHLTSELGAAKHIVTNAALSVVDKAMRIVGAKSLERTNPLQRYYRDVRAGLHNPPMDDAVIHKLAAEAFES.

Residues 158 to 160 and 337 to 341 each bind FAD; these read FTT and RIVGA.

The protein belongs to the acyl-CoA dehydrogenase family. Requires FAD as cofactor.

The protein is Putative acyl-CoA dehydrogenase YdbM (ydbM) of Bacillus subtilis (strain 168).